The following is a 591-amino-acid chain: Beta-fructofuranosidase, insoluble isoenzyme CWINV4 (591 aa).

The signal sequence occupies residues 1–22 (MAISNVISVLLLLLVLINLSNQ). Residues 61-64 (WIND), Gln80, Trp88, and 123-124 (WS) each bind substrate. The active site involves Asp64. N-linked (GlcNAc...) asparagine glycosylation is found at Asn145 and Asn182. Substrate-binding positions include 187–188 (RD), Glu242, and Asp276. 3 N-linked (GlcNAc...) asparagine glycosylation sites follow: Asn336, Asn472, and Asn565. A disulfide bridge connects residues Cys436 and Cys484.

This sequence belongs to the glycosyl hydrolase 32 family. Expressed in flowers, and seeds, and, to a lower extent, in seedlings.

It is found in the secreted. Its subcellular location is the extracellular space. The protein localises to the apoplast. It localises to the cell wall. It catalyses the reaction Hydrolysis of terminal non-reducing beta-D-fructofuranoside residues in beta-D-fructofuranosides.. The polypeptide is Beta-fructofuranosidase, insoluble isoenzyme CWINV4 (CWINV4) (Arabidopsis thaliana (Mouse-ear cress)).